The primary structure comprises 254 residues: uncharacterized protein (254 aa).

The Acyl-thioester intermediate role is filled by cysteine 71. Catalysis depends on residues histidine 110 and aspartate 125.

This sequence belongs to the arylamine N-acetyltransferase family.

This is an uncharacterized protein from Bacillus subtilis (strain 168).